The following is a 661-amino-acid chain: UvrABC system protein B (661 aa).

The Helicase ATP-binding domain maps to 31 to 186; the sequence is DNIEGGEKAQ…LLNALVDIQF (156 aa). 44–51 provides a ligand contact to ATP; it reads GATGTGKT. Positions 97–120 match the Beta-hairpin motif; the sequence is YYDYYQPEAYVPSSDTYIEKDSSV. The Helicase C-terminal domain occupies 435–601; it reads QMDDLLGEIN…TIKKEIRDLI (167 aa). Positions 626–661 constitute a UVR domain; sequence KAMIKKLEGQMQEAAEVLDFELAAQIRDMVIELKNM.

This sequence belongs to the UvrB family. In terms of assembly, forms a heterotetramer with UvrA during the search for lesions. Interacts with UvrC in an incision complex.

The protein localises to the cytoplasm. Functionally, the UvrABC repair system catalyzes the recognition and processing of DNA lesions. A damage recognition complex composed of 2 UvrA and 2 UvrB subunits scans DNA for abnormalities. Upon binding of the UvrA(2)B(2) complex to a putative damaged site, the DNA wraps around one UvrB monomer. DNA wrap is dependent on ATP binding by UvrB and probably causes local melting of the DNA helix, facilitating insertion of UvrB beta-hairpin between the DNA strands. Then UvrB probes one DNA strand for the presence of a lesion. If a lesion is found the UvrA subunits dissociate and the UvrB-DNA preincision complex is formed. This complex is subsequently bound by UvrC and the second UvrB is released. If no lesion is found, the DNA wraps around the other UvrB subunit that will check the other stand for damage. This is UvrABC system protein B from Streptococcus suis (strain 98HAH33).